Reading from the N-terminus, the 1299-residue chain is Protein prickle (1299 aa).

Over residues methionine 1 to glycine 19 the composition is skewed to gly residues. Disordered regions lie at residues methionine 1–alanine 24, alanine 115–glutamine 181, glutamate 241–proline 289, leucine 368–serine 396, and leucine 425–serine 527. Over residues serine 145 to histidine 159 the composition is skewed to basic residues. Positions asparagine 168 to glutamine 181 are enriched in polar residues. Residues proline 263–alanine 272 are compositionally biased toward pro residues. Over residues leucine 425–glycine 434 the composition is skewed to low complexity. A compositionally biased stretch (gly residues) spans alanine 435–alanine 445. A compositionally biased stretch (polar residues) spans proline 457 to glutamine 469. In terms of domain architecture, PET spans methionine 515 to proline 623. The segment covering aspartate 516–aspartate 525 has biased composition (basic and acidic residues). LIM zinc-binding domains are found at residues arginine 622 to lysine 686, proline 687 to glutamate 747, and tyrosine 748 to proline 810. Disordered regions lie at residues glycine 807–threonine 865, lysine 902–glutamine 940, and alanine 1026–serine 1249. A compositionally biased stretch (low complexity) spans proline 844 to alanine 864. Composition is skewed to polar residues over residues arginine 922–asparagine 934 and serine 1070–serine 1081. The segment covering serine 1089 to serine 1101 has biased composition (low complexity). Basic and acidic residues predominate over residues glycine 1136–glycine 1150. A compositionally biased stretch (basic residues) spans arginine 1151 to serine 1183. A compositionally biased stretch (basic and acidic residues) spans serine 1216 to glutamate 1231. A compositionally biased stretch (low complexity) spans valine 1238–serine 1249.

This sequence belongs to the prickle / espinas / testin family. Interacts with dsh; PET and LIM domains interact with dsh DEP domain, in wing cells. Interacts with Vang in photoreceptor cells. As to expression, expressed in the wing, leg and eye imaginal disks. Expressed within the photoreceptors of the eye.

It is found in the cell membrane. Its function is as follows. Acts in a planar cell polarity (PCP) complex; polarization along the apical/basal axis of epithelial cells. Correct expression of the alternative isoforms is required for PCP signaling in imaginal disks. PCP signaling in the wing disk requires the receptor fz and the cytoplasmic proteins dsh and pk. These act in a feedback loop leading to activation of the jnk cascade and subsequent polarized arrangement of hairs and bristles. Dgo and pk compete with one another for dsh binding, thereby modulating fz dsh activity and ensuring tight control over fz PCP signaling. Vang, stan and pk function together to regulate the establishment of tissue polarity in the adult eye. The polypeptide is Protein prickle (Drosophila melanogaster (Fruit fly)).